We begin with the raw amino-acid sequence, 459 residues long: Diaminopimelate decarboxylase (459 aa).

Lys89 bears the N6-(pyridoxal phosphate)lysine mark. Pyridoxal 5'-phosphate-binding positions include Gly271 and 313–316; that span reads EPGR. Substrate-binding residues include Arg316, Arg357, and Tyr361. Cys388 acts as the Proton donor in catalysis. Residues Glu389 and Tyr418 each contribute to the substrate site. Position 418 (Tyr418) interacts with pyridoxal 5'-phosphate.

Belongs to the Orn/Lys/Arg decarboxylase class-II family. LysA subfamily. In terms of assembly, homodimer. Pyridoxal 5'-phosphate serves as cofactor.

It catalyses the reaction meso-2,6-diaminopimelate + H(+) = L-lysine + CO2. It participates in amino-acid biosynthesis; L-lysine biosynthesis via DAP pathway; L-lysine from DL-2,6-diaminopimelate: step 1/1. Functionally, specifically catalyzes the decarboxylation of meso-diaminopimelate (meso-DAP) to L-lysine. In Corynebacterium efficiens (strain DSM 44549 / YS-314 / AJ 12310 / JCM 11189 / NBRC 100395), this protein is Diaminopimelate decarboxylase.